A 490-amino-acid chain; its full sequence is 5'-3' exonuclease PLD3 (490 aa).

Residues 1–38 (MKPKLMYQELKVPAEEPANELPMNEIEAWKAAEKKARW) lie on the Cytoplasmic side of the membrane. Residues 39-59 (VLLVLILAVVGFGALMTQLFL) traverse the membrane as a helical; Signal-anchor for type II membrane protein segment. Over 60 to 490 (WEYGDLHLFG…DSVGNACRLL (431 aa)) the chain is Lumenal. 2 disulfides stabilise this stretch: Cys-77-Cys-239 and Cys-81-Cys-237. Asn-97 and Asn-132 each carry an N-linked (GlcNAc...) asparagine glycan. Residues 196-223 (THGVLHTKFWVVDQTHFYLGSANMDWRS) enclose the PLD phosphodiesterase 1 domain. Active-site residues include His-201, Lys-203, and Asp-208. His-201 serves as the catalytic Proton donor. Residues His-201 and Lys-203 each coordinate phosphate. Asn-218 contributes to the phosphate binding site. N-linked (GlcNAc...) asparagine glycosylation is found at Asn-236, Asn-284, and Asn-387. A disulfide bond links Cys-366 and Cys-487. The PLD phosphodiesterase 2 domain occupies 411–437 (YARVNHNKYMVTERATYIGTSNWSGNY). His-416 contributes to the phosphate binding site. Residue His-416 is the Nucleophile of the active site. Phe-438 provides a ligand contact to Mg(2+).

The protein belongs to the phospholipase D family. Homodimer. Interacts with APP. Post-translationally, N-glycosylated. In terms of processing, proteolytically processed to a soluble active form that is stable within endosomes and lysosomes. During transport through the secretory pathway becomes proteolysed by cysteine proteases, thereby releasing a stable soluble lysosomal lumenal polypeptide, whereas the transmembrane-bound fragment is rapidly degraded. Its transport route to lysosomes involves ubiquitination and the ESCRT complex. Ubiquitinated at N-terminus. Ubiquitination mediates sorting into lysosomes. Widely expressed. In the brain, high levels of expression are detected in the frontal, temporal and occipital cortices and hippocampus. Expressed at low level in corpus callosum. Expressed in plasmacytoid dendritic cells and monocytes (at protein level).

The protein resides in the endoplasmic reticulum membrane. The protein localises to the lysosome lumen. It is found in the early endosome membrane. Its subcellular location is the late endosome membrane. It localises to the golgi apparatus membrane. The protein resides in the endosome membrane. The enzyme catalyses Exonucleolytic cleavage in the 5'- to 3'-direction to yield nucleoside 3'-phosphates.. It carries out the reaction a 5'-end 5'-dephospho-ribonucleotidyl-ribonucleotide-RNA + H2O = a ribonucleoside 3'-phosphate + a 5'-end dephospho-ribonucleoside-RNA + H(+). The catalysed reaction is a ribonucleoside 3'-phosphate-2'-3'-cyclophospho-GMP + H2O = a ribonucleoside 3'-phosphate + 2',3'-cyclophospho-GMP + H(+). It catalyses the reaction a 5'-end 5'-dephospho-2'-deoxyribonucleotidyl-2'-deoxyribonucleotide in single-stranded DNA + H2O = a 5'-end dephospho-2'-deoxyribonucleoside in single-stranded DNA + a 2'-deoxyribonucleoside 3'-phosphate + H(+). The enzyme catalyses a 5'-end 5'-phospho-2'-deoxyribonucleotide in single-stranded DNA + H2O = a 5'-end 5'-dephospho-2'-deoxyribonucleotide in single-stranded DNA + phosphate. It carries out the reaction a 3-lyso-sn-glycero-1-phospho-(3'-acyl-1'-sn-glycerol) + a 1-acyl-sn-glycerol = a 3-acyl-sn-glycero-1-phospho-(3'-acyl-1'-sn-glycerol) + glycerol. The catalysed reaction is 3-lyso-sn-glycero-1-phospho-(3'-(9Z-octadecenoyl)-1'-sn-glycerol) + 1-(9Z-octadecenoyl)-sn-glycerol = 3-(9Z-octadecenoyl)-sn-glycero-1-phospho-(3'-(9Z-octadecenoyl)-1'-sn-glycerol) + glycerol. With respect to regulation, the exonuclease activity toward ssDNA substrate is Ca(2+) and Mg(2+)-independent, but it is inhibited by Fe(2+), Cu(2+) and to a lesser extent Zn(2+) ions. Its function is as follows. 5'-&gt;3' exonuclease that hydrolyzes the phosphodiester bond of single-stranded DNA (ssDNA) and RNA molecules to form nucleoside 3'-monophosphates and 5'-end 5'-hydroxy deoxyribonucleotide/ribonucleotide fragments. Partially redundant with PLD4, can cleave all four nucleotides displaying higher efficiency for ssDNA and RNA fragments initiated with uridine and guanosine residues and lower efficiency for cytidine-initiated substrates. As a result, it does not always degrade polynucleotides to the single nucleotide level, it can stall at specific sites sparing certain fragments from exonucleolytic degradation. Processes self and pathogenic ssDNA and RNA molecules that reach the endolysosomal compartment via phagocytosis or autophagy and may serve as 'danger' signals for recognition by innate immune receptors such as toll-like receptors (TLRs). Degrades mitochondrial CpG-rich ssDNA fragments to prevent TLR9 activation and autoinflammatory response, but it can cleave viral RNA to generate ligands for TLR7 activation and initiate antiviral immune responses. In plasmacytoid dendritic cells, it cooperates with endonuclease RNASET2 to release 2',3'-cyclic guanosine monophosphate (2',3'-cGMP), a potent stimulatory ligand for TLR7. Produces 2',3'-cGMPs and cytidine-rich RNA fragments that occupy TLR7 ligand-binding pockets and trigger a signaling-competent state. Can exert polynucleotide phosphatase activity toward 5'-phosphorylated ssDNA substrates although at a slow rate. Transphosphatidylase that catalyzes the exchange with R to S stereo-inversion of the glycerol moiety between (S,R)-lysophosphatidylglycerol (LPG) and monoacylglycerol (MAG) substrates to yield (S,S)-bis(monoacylglycero)phosphate (BMP). Can synthesize a variety of (S,S)-BMPs representing the main phospholipid constituent of lysosomal intralumenal vesicle (ILV) membranes that bind acid hydrolases for lipid degradation. Regulates the homeostasis and interorganellar communication of the endolysosomal system with an overall impact on cellular removal of dysfunctional organelles via autophagy as well as proper protein and lipid turnover. May play a role in myotube formation in response to ER stress. This is 5'-3' exonuclease PLD3 from Homo sapiens (Human).